An 86-amino-acid polypeptide reads, in one-letter code: Cytochrome c oxidase subunit 12, mitochondrial (86 aa).

Residues 30-73 (TKHCFQSYIDYFRCIKAKGEDFVPCKQFWHAYQSLCPMEWVERW) form the CHCH domain. The short motif at 33-43 (CFQSYIDYFRC) is the Cx9C motif element. 2 disulfide bridges follow: C33–C65 and C43–C54. Positions 54–65 (CKQFWHAYQSLC) match the Cx10C motif motif.

It belongs to the cytochrome c oxidase subunit 6B family. As to quaternary structure, component of the cytochrome c oxidase (complex IV, CIV), a multisubunit enzyme composed of a catalytic core of 3 subunits and several supernumerary subunits. The complex exists as a monomer or a dimer and forms supercomplexes (SCs) in the inner mitochondrial membrane with ubiquinol-cytochrome c oxidoreductase (cytochrome b-c1 complex, complex III, CIII).

It is found in the mitochondrion inner membrane. The protein operates within energy metabolism; oxidative phosphorylation. Component of the cytochrome c oxidase, the last enzyme in the mitochondrial electron transport chain which drives oxidative phosphorylation. The respiratory chain contains 3 multisubunit complexes succinate dehydrogenase (complex II, CII), ubiquinol-cytochrome c oxidoreductase (cytochrome b-c1 complex, complex III, CIII) and cytochrome c oxidase (complex IV, CIV), that cooperate to transfer electrons derived from NADH and succinate to molecular oxygen, creating an electrochemical gradient over the inner membrane that drives transmembrane transport and the ATP synthase. Cytochrome c oxidase is the component of the respiratory chain that catalyzes the reduction of oxygen to water. Electrons originating from reduced cytochrome c in the intermembrane space (IMS) are transferred via the dinuclear copper A center (CU(A)) of subunit 2 and heme A of subunit 1 to the active site in subunit 1, a binuclear center (BNC) formed by heme A3 and copper B (CU(B)). The BNC reduces molecular oxygen to 2 water molecules using 4 electrons from cytochrome c in the IMS and 4 protons from the mitochondrial matrix. This is Cytochrome c oxidase subunit 12, mitochondrial (cox12) from Schizosaccharomyces pombe (strain 972 / ATCC 24843) (Fission yeast).